The primary structure comprises 305 residues: Aspartate carbamoyltransferase catalytic subunit (305 aa).

Residues Arg-52 and Thr-53 each coordinate carbamoyl phosphate. Lys-80 provides a ligand contact to L-aspartate. Carbamoyl phosphate-binding residues include Arg-102, His-132, and Gln-135. Residues Arg-165 and Arg-217 each coordinate L-aspartate. Positions 258 and 259 each coordinate carbamoyl phosphate.

It belongs to the aspartate/ornithine carbamoyltransferase superfamily. ATCase family. In terms of assembly, heterododecamer (2C3:3R2) of six catalytic PyrB chains organized as two trimers (C3), and six regulatory PyrI chains organized as three dimers (R2).

It carries out the reaction carbamoyl phosphate + L-aspartate = N-carbamoyl-L-aspartate + phosphate + H(+). It participates in pyrimidine metabolism; UMP biosynthesis via de novo pathway; (S)-dihydroorotate from bicarbonate: step 2/3. Functionally, catalyzes the condensation of carbamoyl phosphate and aspartate to form carbamoyl aspartate and inorganic phosphate, the committed step in the de novo pyrimidine nucleotide biosynthesis pathway. This chain is Aspartate carbamoyltransferase catalytic subunit, found in Latilactobacillus sakei subsp. sakei (strain 23K) (Lactobacillus sakei subsp. sakei).